Consider the following 347-residue polypeptide: FMRFamide-related peptides (347 aa).

The first 22 residues, 1-22 (MGIALMFLLALYQMQSAIHSEI), serve as a signal peptide directing secretion. A propeptide spanning residues 23 to 102 (IDTPNYAGNS…RYKYDPELEA (80 aa)) is cleaved from the precursor. The residue at position 114 (Phe-114) is a Phenylalanine amide. Tyr-146 bears the Tyrosine amide mark. Residues Phe-157, Phe-168, Phe-179, Phe-190, Phe-201, Phe-212, Phe-223, and Phe-232 each carry the phenylalanine amide modification. A propeptide spanning residues 235–240 (SPHEEL) is cleaved from the precursor. Phe-250 and Phe-259 each carry phenylalanine amide. Residue Ser-270 is modified to Serine amide. A Phenylalanine amide modification is found at Phe-280. A propeptide spanning residues 283–347 (SLKPAAPESK…SVEQDQFFGQ (65 aa)) is cleaved from the precursor. The disordered stretch occupies residues 283 to 347 (SLKPAAPESK…SVEQDQFFGQ (65 aa)). The span at 305 to 320 (SPVDKAMTELFKKQEL) shows a compositional bias: basic and acidic residues. A compositionally biased stretch (polar residues) spans 321 to 347 (QDQQVKNGAQATTTQDGSVEQDQFFGQ).

The protein belongs to the FARP (FMRFamide related peptide) family. Post-translationally, this precursor includes 13 peptides that have FMRF or related sequences at their C-termini, and other putative neuropeptides.

The protein resides in the secreted. In insects, FMRFamide and related peptides have modulatory actions at skeletal neuromuscular junctions, and peptides that are immunologically related to FMRFamide are released into the circulation from neurohemal organs. The protein is FMRFamide-related peptides of Drosophila melanogaster (Fruit fly).